The primary structure comprises 359 residues: UDP-3-O-acylglucosamine N-acyltransferase (359 aa).

Histidine 256 serves as the catalytic Proton acceptor.

The protein belongs to the transferase hexapeptide repeat family. LpxD subfamily. As to quaternary structure, homotrimer.

The enzyme catalyses a UDP-3-O-[(3R)-3-hydroxyacyl]-alpha-D-glucosamine + a (3R)-hydroxyacyl-[ACP] = a UDP-2-N,3-O-bis[(3R)-3-hydroxyacyl]-alpha-D-glucosamine + holo-[ACP] + H(+). It functions in the pathway bacterial outer membrane biogenesis; LPS lipid A biosynthesis. Functionally, catalyzes the N-acylation of UDP-3-O-acylglucosamine using 3-hydroxyacyl-ACP as the acyl donor. Is involved in the biosynthesis of lipid A, a phosphorylated glycolipid that anchors the lipopolysaccharide to the outer membrane of the cell. This chain is UDP-3-O-acylglucosamine N-acyltransferase, found in Rhodopseudomonas palustris (strain BisB5).